Consider the following 196-residue polypeptide: Ribonuclease HII (196 aa).

Positions 9–196 (NLIAGVDEVG…APVKRALNLV (188 aa)) constitute an RNase H type-2 domain. D15, E16, and D107 together coordinate a divalent metal cation.

The protein belongs to the RNase HII family. Mn(2+) serves as cofactor. Mg(2+) is required as a cofactor.

It localises to the cytoplasm. The catalysed reaction is Endonucleolytic cleavage to 5'-phosphomonoester.. In terms of biological role, endonuclease that specifically degrades the RNA of RNA-DNA hybrids. This Proteus mirabilis (strain HI4320) protein is Ribonuclease HII.